The sequence spans 214 residues: tRNA (guanine-N(7)-)-methyltransferase (214 aa).

Residues D35, E60, N87, and D113 each coordinate S-adenosyl-L-methionine. D113 is an active-site residue. Residues K117 and D149 each contribute to the substrate site.

This sequence belongs to the class I-like SAM-binding methyltransferase superfamily. TrmB family.

It carries out the reaction guanosine(46) in tRNA + S-adenosyl-L-methionine = N(7)-methylguanosine(46) in tRNA + S-adenosyl-L-homocysteine. It participates in tRNA modification; N(7)-methylguanine-tRNA biosynthesis. Its function is as follows. Catalyzes the formation of N(7)-methylguanine at position 46 (m7G46) in tRNA. This is tRNA (guanine-N(7)-)-methyltransferase from Prochlorococcus marinus (strain NATL2A).